The chain runs to 399 residues: Argininosuccinate synthase (399 aa).

ATP-binding positions include 10 to 18 and alanine 38; that span reads AYSGGVDTS. Tyrosine 89 contributes to the L-citrulline binding site. Position 119 (glycine 119) interacts with ATP. Positions 121, 125, and 126 each coordinate L-aspartate. Position 125 (asparagine 125) interacts with L-citrulline. 5 residues coordinate L-citrulline: arginine 129, serine 177, serine 186, glutamate 262, and tyrosine 274.

It belongs to the argininosuccinate synthase family. Type 1 subfamily. Homotetramer.

Its subcellular location is the cytoplasm. It carries out the reaction L-citrulline + L-aspartate + ATP = 2-(N(omega)-L-arginino)succinate + AMP + diphosphate + H(+). Its pathway is amino-acid biosynthesis; L-arginine biosynthesis; L-arginine from L-ornithine and carbamoyl phosphate: step 2/3. The protein is Argininosuccinate synthase of Rippkaea orientalis (strain PCC 8801 / RF-1) (Cyanothece sp. (strain PCC 8801)).